The primary structure comprises 294 residues: NAD kinase (294 aa).

The active-site Proton acceptor is D74. Residues 74 to 75, 148 to 149, H159, R176, D178, 189 to 194, and Q249 contribute to the NAD(+) site; these read DG, NE, and TAYSLS.

This sequence belongs to the NAD kinase family. A divalent metal cation is required as a cofactor.

Its subcellular location is the cytoplasm. The catalysed reaction is NAD(+) + ATP = ADP + NADP(+) + H(+). In terms of biological role, involved in the regulation of the intracellular balance of NAD and NADP, and is a key enzyme in the biosynthesis of NADP. Catalyzes specifically the phosphorylation on 2'-hydroxyl of the adenosine moiety of NAD to yield NADP. This chain is NAD kinase, found in Vibrio vulnificus (strain CMCP6).